Consider the following 60-residue polypeptide: Large ribosomal subunit protein bL32 (60 aa).

Residues 1 to 23 (MAVPKRKKSKSRRNMHRSHHAIK) are disordered.

Belongs to the bacterial ribosomal protein bL32 family.

The sequence is that of Large ribosomal subunit protein bL32 from Wolbachia pipientis subsp. Culex pipiens (strain wPip).